The chain runs to 184 residues: NEDD8-conjugating enzyme Ubc12 (184 aa).

Residues 30-175 (AGELRLHKDI…VRRAMTGGYV (146 aa)) form the UBC core domain. Cysteine 113 functions as the Glycyl thioester intermediate in the catalytic mechanism.

It belongs to the ubiquitin-conjugating enzyme family. UBC12 subfamily. Interacts with RBX1. Expressed in shoot, root and floral meristems, and in vascular tissues of leaves.

The protein operates within protein modification; protein neddylation. In terms of biological role, accepts the ubiquitin-like protein NEDD8/RUB1 from the ECR1-AXR1 E1 complex and catalyzes its covalent attachment to other proteins. The protein is NEDD8-conjugating enzyme Ubc12 (RCE1) of Arabidopsis thaliana (Mouse-ear cress).